Consider the following 480-residue polypeptide: ATP synthase subunit beta, chloroplastic (480 aa).

161 to 168 contributes to the ATP binding site; it reads GGAGVGKT.

The protein belongs to the ATPase alpha/beta chains family. In terms of assembly, F-type ATPases have 2 components, CF(1) - the catalytic core - and CF(0) - the membrane proton channel. CF(1) has five subunits: alpha(3), beta(3), gamma(1), delta(1), epsilon(1). CF(0) has four main subunits: a(1), b(1), b'(1) and c(9-12).

The protein resides in the plastid. The protein localises to the chloroplast thylakoid membrane. The enzyme catalyses ATP + H2O + 4 H(+)(in) = ADP + phosphate + 5 H(+)(out). Its function is as follows. Produces ATP from ADP in the presence of a proton gradient across the membrane. The catalytic sites are hosted primarily by the beta subunits. The polypeptide is ATP synthase subunit beta, chloroplastic (Tetradesmus obliquus (Green alga)).